Consider the following 642-residue polypeptide: 1-deoxy-D-xylulose-5-phosphate synthase (642 aa).

Residues His-79 and 120-122 contribute to the thiamine diphosphate site; that span reads GHS. A Mg(2+)-binding site is contributed by Asp-151. Thiamine diphosphate-binding positions include 152 to 153, Asn-180, Tyr-290, and Glu-372; that span reads GS. Residue Asn-180 participates in Mg(2+) binding.

It belongs to the transketolase family. DXPS subfamily. In terms of assembly, homodimer. Mg(2+) is required as a cofactor. The cofactor is thiamine diphosphate.

It catalyses the reaction D-glyceraldehyde 3-phosphate + pyruvate + H(+) = 1-deoxy-D-xylulose 5-phosphate + CO2. Its pathway is metabolic intermediate biosynthesis; 1-deoxy-D-xylulose 5-phosphate biosynthesis; 1-deoxy-D-xylulose 5-phosphate from D-glyceraldehyde 3-phosphate and pyruvate: step 1/1. In terms of biological role, catalyzes the acyloin condensation reaction between C atoms 2 and 3 of pyruvate and glyceraldehyde 3-phosphate to yield 1-deoxy-D-xylulose-5-phosphate (DXP). In Rhodospirillum centenum (strain ATCC 51521 / SW), this protein is 1-deoxy-D-xylulose-5-phosphate synthase.